Here is an 89-residue protein sequence, read N- to C-terminus: MAKKSKIVKDQKQRELVLKYAKLRLELKKKADYAGLSQIPAKASPVRLKNRDSIDGRPRGYIRKFGISRINFRQLAHQGKLPGVRKTSW.

Belongs to the universal ribosomal protein uS14 family. Part of the 30S ribosomal subunit. Contacts proteins S3 and S10.

Binds 16S rRNA, required for the assembly of 30S particles and may also be responsible for determining the conformation of the 16S rRNA at the A site. The polypeptide is Small ribosomal subunit protein uS14 (Onion yellows phytoplasma (strain OY-M)).